The following is a 120-amino-acid chain: Chaperonin GroEL (120 aa).

23–27 (DGTTT) is an ATP binding site.

It belongs to the chaperonin (HSP60) family. In terms of assembly, forms a cylinder of 14 subunits composed of two heptameric rings stacked back-to-back. Interacts with the co-chaperonin GroES.

It is found in the cytoplasm. The enzyme catalyses ATP + H2O + a folded polypeptide = ADP + phosphate + an unfolded polypeptide.. Its function is as follows. Together with its co-chaperonin GroES, plays an essential role in assisting protein folding. The GroEL-GroES system forms a nano-cage that allows encapsulation of the non-native substrate proteins and provides a physical environment optimized to promote and accelerate protein folding. This Mycolicibacterium vaccae (Mycobacterium vaccae) protein is Chaperonin GroEL.